Here is a 248-residue protein sequence, read N- to C-terminus: Ribonuclease PH (248 aa).

Phosphate-binding positions include Arg86 and 124-126; that span reads GTR.

Belongs to the RNase PH family. Homohexameric ring arranged as a trimer of dimers.

It carries out the reaction tRNA(n+1) + phosphate = tRNA(n) + a ribonucleoside 5'-diphosphate. Its function is as follows. Phosphorolytic 3'-5' exoribonuclease that plays an important role in tRNA 3'-end maturation. Removes nucleotide residues following the 3'-CCA terminus of tRNAs; can also add nucleotides to the ends of RNA molecules by using nucleoside diphosphates as substrates, but this may not be physiologically important. Probably plays a role in initiation of 16S rRNA degradation (leading to ribosome degradation) during starvation. The sequence is that of Ribonuclease PH from Clostridium perfringens (strain ATCC 13124 / DSM 756 / JCM 1290 / NCIMB 6125 / NCTC 8237 / Type A).